Reading from the N-terminus, the 203-residue chain is MRILIQFTKRHPWLTNVTIYGSLFASADIVQQKLSKSPTEPIDFKQTAKVGLVGFCFHANFNFFWLRFIERTFPGSAPLNVIRKVACDQLMAAPITISAFYTGLSLLDGERDVFKNLKEKFWPTYKTGVMCWTVFQTINFSVIPPFVRTAYIGVCAFLWTTFLCYIRNRDINEVTTRLLHAVPNIRGKMAFPQDQDDNKPADK.

The Cytoplasmic segment spans residues 1–12; the sequence is MRILIQFTKRHP. The helical transmembrane segment at 13-30 threads the bilayer; it reads WLTNVTIYGSLFASADIV. The Lumenal segment spans residues 31-49; that stretch reads QQKLSKSPTEPIDFKQTAK. The helical transmembrane segment at 50 to 69 threads the bilayer; it reads VGLVGFCFHANFNFFWLRFI. Residues 70–89 lie on the Cytoplasmic side of the membrane; that stretch reads ERTFPGSAPLNVIRKVACDQ. Residues 90-107 form a helical membrane-spanning segment; the sequence is LMAAPITISAFYTGLSLL. Residues 108-143 lie on the Lumenal side of the membrane; the sequence is DGERDVFKNLKEKFWPTYKTGVMCWTVFQTINFSVI. A helical membrane pass occupies residues 144–166; sequence PPFVRTAYIGVCAFLWTTFLCYI. Residues 167–203 lie on the Cytoplasmic side of the membrane; it reads RNRDINEVTTRLLHAVPNIRGKMAFPQDQDDNKPADK.

The protein belongs to the peroxisomal membrane protein PXMP2/4 family.

The protein localises to the peroxisome membrane. In terms of biological role, participates in reactive oxygen species metabolism by up- or down-regulation of the genes of antioxidant enzymes. Protective against the mitochondrial apoptotic cascade. This chain is Mpv17-like protein (mpv17l), found in Xenopus laevis (African clawed frog).